Reading from the N-terminus, the 885-residue chain is Protein arg11, mitochondrial (885 aa).

The transit peptide at 1–59 (MLIELQQIVKSGLVRNGAKHCTKRSLLCSNASVIASKRFQGSFAPGQQQPLNPLAKPIE) directs the protein to the mitochondrion. The N-acetyltransferase domain occupies 346–499 (FVINKHDSLD…SDKPFADAII (154 aa)). The span at 503–523 (STKPPTASSTTNNPSSSQINQ) shows a compositional bias: low complexity. The disordered stretch occupies residues 503–532 (STKPPTASSTTNNPSSSQINQKRSYSTSSL). The active site involves Cys-703.

This sequence in the N-terminal section; belongs to the acetylglutamate kinase family. The protein in the C-terminal section; belongs to the NAGSA dehydrogenase family. In terms of processing, the protein precursor is probably cleaved into the two biologically active enzymes, the kinase and the reductase.

It localises to the mitochondrion. It carries out the reaction N-acetyl-L-glutamate 5-semialdehyde + phosphate + NADP(+) = N-acetyl-L-glutamyl 5-phosphate + NADPH + H(+). The enzyme catalyses N-acetyl-L-glutamate + ATP = N-acetyl-L-glutamyl 5-phosphate + ADP. The protein operates within amino-acid biosynthesis; L-arginine biosynthesis; N(2)-acetyl-L-ornithine from L-glutamate: step 2/4. It participates in amino-acid biosynthesis; L-arginine biosynthesis; N(2)-acetyl-L-ornithine from L-glutamate: step 3/4. Its activity is regulated as follows. The kinase activity is inhibited by arginine. This Schizosaccharomyces pombe (strain 972 / ATCC 24843) (Fission yeast) protein is Protein arg11, mitochondrial (arg11).